Reading from the N-terminus, the 249-residue chain is Cell division protein DivIB (249 aa).

Residues 1-19 are Cytoplasmic-facing; it reads MKEENEYIVKRRKKRRRKR. The helical transmembrane segment at 20–40 threads the bilayer; the sequence is ITIFLFLLICILVTLCLKLPY. Residues 41 to 109 form the POTRA domain; that stretch reads FNIKYINVEG…NTIDIIVKER (69 aa). Residues 41 to 249 lie on the Extracellular side of the membrane; sequence FNIKYINVEG…KGNPVYSLQQ (209 aa).

It belongs to the FtsQ/DivIB family. DivIB subfamily.

It localises to the cell membrane. In terms of biological role, cell division protein that may be involved in stabilizing or promoting the assembly of the division complex. The polypeptide is Cell division protein DivIB (Clostridium acetobutylicum (strain ATCC 824 / DSM 792 / JCM 1419 / IAM 19013 / LMG 5710 / NBRC 13948 / NRRL B-527 / VKM B-1787 / 2291 / W)).